The chain runs to 584 residues: 2-succinyl-5-enolpyruvyl-6-hydroxy-3-cyclohexene-1-carboxylate synthase (584 aa).

This sequence belongs to the TPP enzyme family. MenD subfamily. As to quaternary structure, homodimer. The cofactor is Mg(2+). Requires Mn(2+) as cofactor. Thiamine diphosphate serves as cofactor.

The catalysed reaction is isochorismate + 2-oxoglutarate + H(+) = 5-enolpyruvoyl-6-hydroxy-2-succinyl-cyclohex-3-ene-1-carboxylate + CO2. It functions in the pathway quinol/quinone metabolism; 1,4-dihydroxy-2-naphthoate biosynthesis; 1,4-dihydroxy-2-naphthoate from chorismate: step 2/7. The protein operates within quinol/quinone metabolism; menaquinone biosynthesis. Functionally, catalyzes the thiamine diphosphate-dependent decarboxylation of 2-oxoglutarate and the subsequent addition of the resulting succinic semialdehyde-thiamine pyrophosphate anion to isochorismate to yield 2-succinyl-5-enolpyruvyl-6-hydroxy-3-cyclohexene-1-carboxylate (SEPHCHC). The chain is 2-succinyl-5-enolpyruvyl-6-hydroxy-3-cyclohexene-1-carboxylate synthase from Bacillus cereus (strain ATCC 10987 / NRS 248).